Reading from the N-terminus, the 593-residue chain is DNA primase (593 aa).

The segment at 38 to 62 adopts a CHC2-type zinc-finger fold; it reads CPFHQEKTPSFTVSDSKRFFYCFGC. The 83-residue stretch at 250–332 folds into the Toprim domain; the sequence is NRSILVEGYF…EKKISFIRLP (83 aa). Mg(2+)-binding residues include Glu256, Asp300, and Asp302.

Belongs to the DnaG primase family. Monomer. Interacts with DnaB. Zn(2+) is required as a cofactor. The cofactor is Mg(2+).

It catalyses the reaction ssDNA + n NTP = ssDNA/pppN(pN)n-1 hybrid + (n-1) diphosphate.. Its function is as follows. RNA polymerase that catalyzes the synthesis of short RNA molecules used as primers for DNA polymerase during DNA replication. The protein is DNA primase of Rickettsia typhi (strain ATCC VR-144 / Wilmington).